Consider the following 242-residue polypeptide: Zinc import ATP-binding protein ZnuC (242 aa).

The ABC transporter domain maps to 24–241 (INVKNLSFFY…EKFLKMFSSY (218 aa)). 56–63 (GPNGGGKT) is an ATP binding site.

It belongs to the ABC transporter superfamily. Zinc importer (TC 3.A.1.15.5) family. In terms of assembly, the complex is composed of two ATP-binding proteins (ZnuC), two transmembrane proteins (ZnuB) and a solute-binding protein (ZnuA).

It localises to the cell inner membrane. It catalyses the reaction Zn(2+)(out) + ATP(in) + H2O(in) = Zn(2+)(in) + ADP(in) + phosphate(in) + H(+)(in). Part of the ABC transporter complex ZnuABC involved in zinc import. Responsible for energy coupling to the transport system. The sequence is that of Zinc import ATP-binding protein ZnuC from Ehrlichia canis (strain Jake).